We begin with the raw amino-acid sequence, 438 residues long: Histidinol dehydrogenase (438 aa).

NAD(+)-binding residues include Tyr137, Gln198, and Asn221. Substrate-binding residues include Ser244, Gln266, and His269. Residues Gln266 and His269 each coordinate Zn(2+). Active-site proton acceptor residues include Glu334 and His335. Substrate contacts are provided by His335, Asp368, Glu422, and His427. Asp368 is a binding site for Zn(2+). His427 contacts Zn(2+).

Belongs to the histidinol dehydrogenase family. Zn(2+) is required as a cofactor.

It catalyses the reaction L-histidinol + 2 NAD(+) + H2O = L-histidine + 2 NADH + 3 H(+). The protein operates within amino-acid biosynthesis; L-histidine biosynthesis; L-histidine from 5-phospho-alpha-D-ribose 1-diphosphate: step 9/9. Its function is as follows. Catalyzes the sequential NAD-dependent oxidations of L-histidinol to L-histidinaldehyde and then to L-histidine. The protein is Histidinol dehydrogenase of Aromatoleum aromaticum (strain DSM 19018 / LMG 30748 / EbN1) (Azoarcus sp. (strain EbN1)).